Here is a 44-residue protein sequence, read N- to C-terminus: Cytochrome b559 subunit beta (44 aa).

A helical membrane pass occupies residues 19 to 35 (WLAVHTLGVPTVFFLGA). Histidine 23 is a heme binding site.

Belongs to the PsbE/PsbF family. Heterodimer of an alpha subunit and a beta subunit. PSII is composed of 1 copy each of membrane proteins PsbA, PsbB, PsbC, PsbD, PsbE, PsbF, PsbH, PsbI, PsbJ, PsbK, PsbL, PsbM, PsbT, PsbX, PsbY, PsbZ, Psb30/Ycf12, peripheral proteins PsbO, CyanoQ (PsbQ), PsbU, PsbV and a large number of cofactors. It forms dimeric complexes. The cofactor is heme b.

It localises to the cellular thylakoid membrane. This b-type cytochrome is tightly associated with the reaction center of photosystem II (PSII). PSII is a light-driven water:plastoquinone oxidoreductase that uses light energy to abstract electrons from H(2)O, generating O(2) and a proton gradient subsequently used for ATP formation. It consists of a core antenna complex that captures photons, and an electron transfer chain that converts photonic excitation into a charge separation. The sequence is that of Cytochrome b559 subunit beta from Trichodesmium erythraeum (strain IMS101).